The primary structure comprises 171 residues: Putative charged multivesicular body protein 4B-like protein CHMP4BP1 (171 aa).

The segment covering 1–17 (MLSKKQEFLEKKIEQRH) has biased composition (basic and acidic residues). Disordered stretches follow at residues 1–24 (MLSK…NKPA) and 132–171 (EQEE…KTTT).

It belongs to the SNF7 family.

This is Putative charged multivesicular body protein 4B-like protein CHMP4BP1 (CHMP4BP1) from Homo sapiens (Human).